The primary structure comprises 97 residues: Large ribosomal subunit protein bL28 (97 aa).

This sequence belongs to the bacterial ribosomal protein bL28 family.

The polypeptide is Large ribosomal subunit protein bL28 (Sphingopyxis alaskensis (strain DSM 13593 / LMG 18877 / RB2256) (Sphingomonas alaskensis)).